Here is a 250-residue protein sequence, read N- to C-terminus: DNA repair protein RecO (250 aa).

It belongs to the RecO family.

Functionally, involved in DNA repair and RecF pathway recombination. The sequence is that of DNA repair protein RecO from Rhodopseudomonas palustris (strain TIE-1).